Reading from the N-terminus, the 160-residue chain is tRNA (cytidine(34)-2'-O)-methyltransferase (160 aa).

Positions 78, 100, 120, and 128 each coordinate S-adenosyl-L-methionine.

Belongs to the class IV-like SAM-binding methyltransferase superfamily. RNA methyltransferase TrmH family. TrmL subfamily. As to quaternary structure, homodimer.

The protein resides in the cytoplasm. The catalysed reaction is cytidine(34) in tRNA + S-adenosyl-L-methionine = 2'-O-methylcytidine(34) in tRNA + S-adenosyl-L-homocysteine + H(+). It catalyses the reaction 5-carboxymethylaminomethyluridine(34) in tRNA(Leu) + S-adenosyl-L-methionine = 5-carboxymethylaminomethyl-2'-O-methyluridine(34) in tRNA(Leu) + S-adenosyl-L-homocysteine + H(+). Functionally, methylates the ribose at the nucleotide 34 wobble position in the two leucyl isoacceptors tRNA(Leu)(CmAA) and tRNA(Leu)(cmnm5UmAA). Catalyzes the methyl transfer from S-adenosyl-L-methionine to the 2'-OH of the wobble nucleotide. This is tRNA (cytidine(34)-2'-O)-methyltransferase from Beijerinckia indica subsp. indica (strain ATCC 9039 / DSM 1715 / NCIMB 8712).